A 393-amino-acid polypeptide reads, in one-letter code: Golgi membrane protein 1 (393 aa).

M1 bears the N-acetylmethionine mark. Residues 1-12 (MMGLGNGRRSMK) are Cytoplasmic-facing. The helical; Signal-anchor for type II membrane protein transmembrane segment at 13–35 (SPPLILAALVACVIVLGFNYWIA) threads the bilayer. Over 36 to 393 (SSRSVELQTR…QVGIHIPQQA (358 aa)) the chain is Lumenal. Positions 40–183 (VELQTRIVEL…IEEVIRKRNE (144 aa)) form a coiled coil. Residues N109 and N144 are each glycosylated (N-linked (GlcNAc...) asparagine). Disordered regions lie at residues 180-247 (KRNE…QVQN) and 284-352 (HTQL…LAGN). Position 187 is a phosphoserine (S187). 2 stretches are compositionally biased toward polar residues: residues 192–201 (ETNNQHQQAL) and 227–247 (NKSQ…QVQN). The N-linked (GlcNAc...) asparagine glycan is linked to N227. Basic and acidic residues predominate over residues 294 to 320 (RPEEDSQYPEREQLVIRDRQEQQRASE). Residues 330 to 339 (DEYDMDENEA) are compositionally biased toward acidic residues.

It belongs to the GOLM family. Interacts with DYM. In terms of processing, glycosylated. Phosphorylation sites are present in the extracellular medium.

It is found in the golgi apparatus. Its subcellular location is the cis-Golgi network membrane. Unknown. Cellular response protein to viral infection. The sequence is that of Golgi membrane protein 1 (Golm1) from Mus musculus (Mouse).